The following is a 327-amino-acid chain: 4-hydroxy-2-oxoglutarate aldolase, mitochondrial (327 aa).

The N-terminal 25 residues, 1-25 (MLGPQVWSSVRQGLSRSLSRNVGVW), are a transit peptide targeting the mitochondrion. 77–78 (SN) is a substrate binding site. Catalysis depends on Lys-196, which acts as the Schiff-base intermediate with substrate. 2 residues coordinate substrate: Ser-198 and Gly-222.

This sequence belongs to the DapA family. Homotetramer.

The protein resides in the mitochondrion. The enzyme catalyses (4S)-4-hydroxy-2-oxoglutarate = glyoxylate + pyruvate. The catalysed reaction is (4R)-4-hydroxy-2-oxoglutarate = glyoxylate + pyruvate. Inhibited by divalent cations. Its function is as follows. Catalyzes the final step in the metabolic pathway of hydroxyproline. The chain is 4-hydroxy-2-oxoglutarate aldolase, mitochondrial (HOGA1) from Homo sapiens (Human).